The primary structure comprises 347 residues: MKIMKHCSQTFPTTATGSIVGMDVGGTLEITNSFPFPVVEVPPESHFDNAAANPAAAAPRAKANTVYQAEMIRMLREVNVDANNVGWYTSANMGNFVNMNVIENQFFYQKEMNERTVALVHDVSRSSQGSLSLRAFRLSPRFMTAFKENKFTSEELQKSGLRYQDIFVELPVEIHNSHLITSFIHQLQTPNIPAPTDLPPSLAALESGPFVKSSILAPNYDNLTLSIDPFLEKNCDLLLDSIETHHTETNNFQYYQRSLAREQQRISAWQQKRKQENATRAALKQPLLPEDEWQRLFKLPQEPSRLESMLNSRQVDQYARQIDSFVSSTTGKMFAVKGNLLPGETAK.

Residues 1 to 142 form the MPN domain; the sequence is MKIMKHCSQT…LRAFRLSPRF (142 aa).

It belongs to the eIF-3 subunit H family. Component of the eukaryotic translation initiation factor 3 (eIF-3) complex.

The protein resides in the cytoplasm. Component of the eukaryotic translation initiation factor 3 (eIF-3) complex, which is involved in protein synthesis of a specialized repertoire of mRNAs and, together with other initiation factors, stimulates binding of mRNA and methionyl-tRNAi to the 40S ribosome. The eIF-3 complex specifically targets and initiates translation of a subset of mRNAs involved in cell proliferation. The polypeptide is Eukaryotic translation initiation factor 3 subunit H (Neosartorya fischeri (strain ATCC 1020 / DSM 3700 / CBS 544.65 / FGSC A1164 / JCM 1740 / NRRL 181 / WB 181) (Aspergillus fischerianus)).